The chain runs to 212 residues: External core antigen (212 aa).

The first 19 residues, 1–19 (MQLFHLCLIISCSCPTVQA), serve as a signal peptide directing secretion. Residues 25 to 27 (GWL) are HBEAG. Residues 165–212 (NAPILSTLPETTVVRRRGRSPRRRTPSPRRRRSQSPRRRRSQSPASQC) form a disordered region. Positions 178 to 205 (VRRRGRSPRRRTPSPRRRRSQSPRRRRS) are enriched in basic residues. A 1; half-length repeat occupies 184-190 (SPRRRTP). Positions 184-206 (SPRRRTPSPRRRRSQSPRRRRSQ) are 3 X 8 AA repeats of S-P-R-R-R-R-S-Q. The propeptide occupies 184–212 (SPRRRTPSPRRRRSQSPRRRRSQSPASQC). 2 tandem repeats follow at residues 191 to 198 (SPRRRRSQ) and 199 to 206 (SPRRRRSQ).

Belongs to the orthohepadnavirus precore antigen family. In terms of assembly, homodimerizes. Post-translationally, phosphorylated. In terms of processing, cleaved by host furin.

It localises to the secreted. Its subcellular location is the host nucleus. Functionally, may regulate immune response to the intracellular capsid in acting as a T-cell tolerogen, by having an immunoregulatory effect which prevents destruction of infected cells by cytotoxic T-cells. This immune regulation may predispose to chronicity during perinatal infections and prevent severe liver injury during adult infections. This chain is External core antigen, found in Hepatitis B virus genotype F2 subtype adw4q (isolate Senegal/9203) (HBV-F).